Here is a 200-residue protein sequence, read N- to C-terminus: Lipid A acyltransferase PagP (200 aa).

The N-terminal stretch at 1–24 (MRLKLTSHTCLFALSSLLVTPAFA) is a signal peptide. Residues H72, D115, and S116 contribute to the active site.

This sequence belongs to the lipid A palmitoyltransferase family. In terms of assembly, homodimer.

Its subcellular location is the cell outer membrane. The enzyme catalyses a lipid A + a 1,2-diacyl-sn-glycero-3-phosphocholine = a hepta-acyl lipid A + a 2-acyl-sn-glycero-3-phosphocholine. The catalysed reaction is a lipid IVA + a 1,2-diacyl-sn-glycero-3-phosphocholine = a lipid IVB + a 2-acyl-sn-glycero-3-phosphocholine. It carries out the reaction a lipid IIA + a 1,2-diacyl-sn-glycero-3-phosphocholine = a lipid IIB + a 2-acyl-sn-glycero-3-phosphocholine. Transfers a fatty acid residue from the sn-1 position of a phospholipid to the N-linked hydroxyfatty acid chain on the proximal unit of lipid A or its precursors. In Dickeya dadantii (strain 3937) (Erwinia chrysanthemi (strain 3937)), this protein is Lipid A acyltransferase PagP.